A 420-amino-acid chain; its full sequence is MRSWLAPSVPKLAGAGPRLRLWDSADRIIRPVTPGRTATMYVCGITPYDATHLGHAATYLAFDLVHRLWLDAGHQVAYAQNITDVDDPLLERADRDHRDWQELAAEQIELFRTDMSALRVLPPHEYVGVTESVGLVVAMVEKLLANQSAYVVAEGEYPDVYHRIAATEDFGYVSGYGREEMAQVFRERGGDPDRPGKADPLDALLWRAARPGEPSWPSPFGPGRPGWHVECSAIALDRIGFGFDVQGGGSDLVFPHHEFSAAHAQAQHGAGAADEHRRFARNYVHAGMIGLDGEKMSKSLGNLVFVSALRERGVDPSAIRLALFAGHYRADRSWDQGLLREAQERLARWRHAASLASGPAAHDVVARMREHLANDLDTPKALAALDSWSLEAAAHGGGDQEAPALVARAADALLGVQLTP.

Cys43 contacts Zn(2+). L-cysteinyl-5'-AMP is bound by residues 43–46, Thr58, and 81–83; these read CGIT and NIT. Residues 45–55 carry the 'HIGH' region motif; it reads ITPYDATHLGH. Residues 187–192 carry the 'ERGGDP' region motif; sequence ERGGDP. Trp227 is an L-cysteinyl-5'-AMP binding site. Cys231 contributes to the Zn(2+) binding site. 249–251 is an L-cysteinyl-5'-AMP binding site; the sequence is GSD. Zn(2+) is bound at residue His256. An L-cysteinyl-5'-AMP-binding site is contributed by Ile289. Positions 295–299 match the 'KMSKS' region motif; sequence KMSKS.

This sequence belongs to the class-I aminoacyl-tRNA synthetase family. MshC subfamily. In terms of assembly, monomer. Requires Zn(2+) as cofactor.

The enzyme catalyses 1D-myo-inositol 2-amino-2-deoxy-alpha-D-glucopyranoside + L-cysteine + ATP = 1D-myo-inositol 2-(L-cysteinylamino)-2-deoxy-alpha-D-glucopyranoside + AMP + diphosphate + H(+). Functionally, catalyzes the ATP-dependent condensation of GlcN-Ins and L-cysteine to form L-Cys-GlcN-Ins. This chain is L-cysteine:1D-myo-inositol 2-amino-2-deoxy-alpha-D-glucopyranoside ligase, found in Segniliparus rotundus (strain ATCC BAA-972 / CDC 1076 / CIP 108378 / DSM 44985 / JCM 13578).